A 323-amino-acid polypeptide reads, in one-letter code: tRNA(Ile)-lysidine synthase (323 aa).

Residue 33-38 (SGGSDS) coordinates ATP.

The protein belongs to the tRNA(Ile)-lysidine synthase family.

The protein localises to the cytoplasm. It carries out the reaction cytidine(34) in tRNA(Ile2) + L-lysine + ATP = lysidine(34) in tRNA(Ile2) + AMP + diphosphate + H(+). In terms of biological role, ligates lysine onto the cytidine present at position 34 of the AUA codon-specific tRNA(Ile) that contains the anticodon CAU, in an ATP-dependent manner. Cytidine is converted to lysidine, thus changing the amino acid specificity of the tRNA from methionine to isoleucine. The polypeptide is tRNA(Ile)-lysidine synthase (Mycobacterium leprae (strain TN)).